We begin with the raw amino-acid sequence, 201 residues long: Small ribosomal subunit protein uS4c (201 aa).

A disordered region spans residues 20-44 (GLTNKKPRAGSDLRNQSRSGKKSQY). Residues 89–150 (MRLDNILFRL…EQKSKALIQI (62 aa)) enclose the S4 RNA-binding domain.

It belongs to the universal ribosomal protein uS4 family. Part of the 30S ribosomal subunit. Contacts protein S5. The interaction surface between S4 and S5 is involved in control of translational fidelity.

It is found in the plastid. Its subcellular location is the chloroplast. Its function is as follows. One of the primary rRNA binding proteins, it binds directly to 16S rRNA where it nucleates assembly of the body of the 30S subunit. With S5 and S12 plays an important role in translational accuracy. This Nicotiana tomentosiformis (Tobacco) protein is Small ribosomal subunit protein uS4c (rps4).